Here is a 299-residue protein sequence, read N- to C-terminus: Oxygen-dependent coproporphyrinogen-III oxidase (299 aa).

Ser-92 contacts substrate. Mn(2+) is bound by residues His-96 and His-106. Residue His-106 is the Proton donor of the active site. 108–110 (NVR) provides a ligand contact to substrate. Positions 145 and 175 each coordinate Mn(2+). An important for dimerization region spans residues 240-275 (YVEFNLVWDRGTLFGLQTGGRTESILMSMPPLVRWE). Position 258 to 260 (258 to 260 (GGR)) interacts with substrate.

It belongs to the aerobic coproporphyrinogen-III oxidase family. Homodimer. The cofactor is Mn(2+).

It is found in the cytoplasm. The catalysed reaction is coproporphyrinogen III + O2 + 2 H(+) = protoporphyrinogen IX + 2 CO2 + 2 H2O. It functions in the pathway porphyrin-containing compound metabolism; protoporphyrin-IX biosynthesis; protoporphyrinogen-IX from coproporphyrinogen-III (O2 route): step 1/1. Involved in the heme biosynthesis. Catalyzes the aerobic oxidative decarboxylation of propionate groups of rings A and B of coproporphyrinogen-III to yield the vinyl groups in protoporphyrinogen-IX. The chain is Oxygen-dependent coproporphyrinogen-III oxidase from Escherichia coli O8 (strain IAI1).